A 148-amino-acid polypeptide reads, in one-letter code: Inner membrane protein YccF (148 aa).

Over 1-14 the chain is Periplasmic; it reads MRTVLNILNFVLGG. Residues 15–37 traverse the membrane as a helical segment; the sequence is FATTLGWLLATLVSIVLIFTLPL. Over 38 to 76 the chain is Cytoplasmic; sequence TRSCWEITKLSLVPYGNEAIHVDELNPAGKNVLLNTGGT. The chain crosses the membrane as a helical span at residues 77 to 99; it reads VLNIFWLIFFGWWLCLMHIATGI. Over 100-102 the chain is Periplasmic; sequence AQC. The chain crosses the membrane as a helical span at residues 103 to 125; the sequence is ISIIGIPVGIANFKIAAIALWPV. Residues 126 to 148 are Cytoplasmic-facing; sequence GRRVVSVETAQAAREANARRRFE.

It is found in the cell inner membrane. The polypeptide is Inner membrane protein YccF (yccF) (Escherichia coli (strain K12)).